Here is a 444-residue protein sequence, read N- to C-terminus: N-succinylarginine dihydrolase (444 aa).

Substrate-binding positions include 19–28, Asn110, and 137–138; these read AGLSFGNVAS and HR. Residue Glu174 is part of the active site. Arg214 provides a ligand contact to substrate. The active site involves His250. Asp252 and Asn362 together coordinate substrate. Cys368 (nucleophile) is an active-site residue.

It belongs to the succinylarginine dihydrolase family. Homodimer.

It carries out the reaction N(2)-succinyl-L-arginine + 2 H2O + 2 H(+) = N(2)-succinyl-L-ornithine + 2 NH4(+) + CO2. Its pathway is amino-acid degradation; L-arginine degradation via AST pathway; L-glutamate and succinate from L-arginine: step 2/5. Functionally, catalyzes the hydrolysis of N(2)-succinylarginine into N(2)-succinylornithine, ammonia and CO(2). The sequence is that of N-succinylarginine dihydrolase from Shewanella oneidensis (strain ATCC 700550 / JCM 31522 / CIP 106686 / LMG 19005 / NCIMB 14063 / MR-1).